The following is a 328-amino-acid chain: MQGSVTEFLKPRLVDIEQISSTHAKVILEPLERGFGHTLGNALRRILLSSMPGCAVTEVEIDGVLHEYSSKEGVQEDILEVLLNLKGLAVKVQNKDDVILILNKSGIGPVVAADITHDGNVEIVNPDHVICHLTDENASISMRIRVQRGRGYVPASSRTHTQEERPIGRLLVDACYSPVERIAYNVEAARVEQRTDLDKLVIELETNGALEPEEAIRRAATILAEQLDAFVDLRDVRQPEIKEEKPEFDPILLRPVDDLELTVRSANCLKAETIHYIGDLVQRTEVELLKTPNLGKKSLTEIKDVLASRGLSLGMRLENWPPASIAED.

The segment at 1–234 is alpha N-terminal domain (alpha-NTD); the sequence is MQGSVTEFLK…EQLDAFVDLR (234 aa). Residues 248–328 are alpha C-terminal domain (alpha-CTD); it reads FDPILLRPVD…NWPPASIAED (81 aa).

It belongs to the RNA polymerase alpha chain family. Homodimer. The RNAP catalytic core consists of 2 alpha, 1 beta, 1 beta' and 1 omega subunit. When a sigma factor is associated with the core the holoenzyme is formed, which can initiate transcription.

It catalyses the reaction RNA(n) + a ribonucleoside 5'-triphosphate = RNA(n+1) + diphosphate. In terms of biological role, DNA-dependent RNA polymerase catalyzes the transcription of DNA into RNA using the four ribonucleoside triphosphates as substrates. The chain is DNA-directed RNA polymerase subunit alpha from Haemophilus influenzae (strain PittEE).